Here is a 203-residue protein sequence, read N- to C-terminus: Imidazole glycerol phosphate synthase subunit HisH (203 aa).

In terms of domain architecture, Glutamine amidotransferase type-1 spans 1 to 203 (MIGIIDYGMG…KNFGEMIKCL (203 aa)). Residue Cys79 is the Nucleophile of the active site. Catalysis depends on residues His181 and Glu183.

In terms of assembly, heterodimer of HisH and HisF.

Its subcellular location is the cytoplasm. It carries out the reaction 5-[(5-phospho-1-deoxy-D-ribulos-1-ylimino)methylamino]-1-(5-phospho-beta-D-ribosyl)imidazole-4-carboxamide + L-glutamine = D-erythro-1-(imidazol-4-yl)glycerol 3-phosphate + 5-amino-1-(5-phospho-beta-D-ribosyl)imidazole-4-carboxamide + L-glutamate + H(+). The enzyme catalyses L-glutamine + H2O = L-glutamate + NH4(+). The protein operates within amino-acid biosynthesis; L-histidine biosynthesis; L-histidine from 5-phospho-alpha-D-ribose 1-diphosphate: step 5/9. IGPS catalyzes the conversion of PRFAR and glutamine to IGP, AICAR and glutamate. The HisH subunit catalyzes the hydrolysis of glutamine to glutamate and ammonia as part of the synthesis of IGP and AICAR. The resulting ammonia molecule is channeled to the active site of HisF. This is Imidazole glycerol phosphate synthase subunit HisH from Caldanaerobacter subterraneus subsp. tengcongensis (strain DSM 15242 / JCM 11007 / NBRC 100824 / MB4) (Thermoanaerobacter tengcongensis).